Here is a 60-residue protein sequence, read N- to C-terminus: UPF0434 protein Rfer_3156 (60 aa).

This sequence belongs to the UPF0434 family.

The sequence is that of UPF0434 protein Rfer_3156 from Albidiferax ferrireducens (strain ATCC BAA-621 / DSM 15236 / T118) (Rhodoferax ferrireducens).